Reading from the N-terminus, the 312-residue chain is DDRGK domain-containing protein 1 (312 aa).

At 1 to 2 (ME) the chain is on the lumenal side. Residues 3-23 (LIILVGIAIALLVVIITLYLL) form a helical membrane-spanning segment. Residues 24-312 (QKKNAAPETK…ISAGGEEASS (289 aa)) lie on the Cytoplasmic side of the membrane. Residues 30-163 (PETKPAAAPQ…KQQEDLEAEV (134 aa)) are disordered. Residues 52–85 (RRAQIARNQRNRLRQNAPAAPAGQVAPAAGAPAA) are compositionally biased toward low complexity. Acidic residues predominate over residues 90–99 (DHEDEGQVDA). Residues 110–163 (LDEKMGAKKRAKMEAKEQKRLQREQELHDREQRKVKEAKEEAERKQQEDLEAEV) show a composition bias toward basic and acidic residues.

Belongs to the DDRGK1 family. In terms of assembly, interacts with Atg9; the interaction is transient.

It localises to the endoplasmic reticulum membrane. Its function is as follows. Substrate adapter for ufmylation, the covalent attachment of the ubiquitin-like modifier UFM1 to substrate proteins. Required for ufmylation of Atg9; protects the nervous system during aging, possibly by stabilizing Atg9 and supporting its function. The polypeptide is DDRGK domain-containing protein 1 (Drosophila erecta (Fruit fly)).